The chain runs to 693 residues: MACEIMPLRSSQEDERPLSPFYLSAHVSQVSNVSTTGELLERTIRSAVEEHLFDVSNAGDQSSEDSEPGPSSASSIPTRQRGHQFKKQDDVWHGCDKELINKENIPSGFSGCAECILNSQEAERFQDDICDYVGERSKPKRQKSSSRLAKLSDNHDGALSMESLSSMQSQETLEPEAAEPLSSESKEIERGGRDTQHCENPTMKIQEHPSLSDTKQQRNQDGEDQQESFVPDMPQLDLTALCDEKTWEEPIPSWQPENADSDEARLSPQAGRLIHQFLDEDSDPMLSPRFYAYGQSRQYLDDTEVPPSPPNSHSFMRRRSSSLGSYDDEQEDLTPVQLTRRIQTLKKKIRKFEDRFEEERKYRPSHSDKAANPEVLKWTNDLAKFRKQLKESKLKISEEDLTPRTRQRSNTLPKSFGSQLEKEDEKKQELLDKAIRPSVEATLEGILRKLQEKRVESSRPEDIKDMTKDQIANEKVALQKALLYYESIHGRPVTKTERQIMKPLYDRYRLVKQILSRASTVPIIGSPSSKRRSPSLQPIIEGETASFFKEIKEQEEGSEDDSSTKPDFAVTLKTDCSAHCFLDQLEDDADGFISPMDDKMPSKCSQDSGLSNLHSASIPELLEYLQEMREEKKMIRKKLHDFEDNFFRQNGRNVQKEDRTPMAEEYNEYKHIKAKLRLLEVLISKRDSDSKSM.

Ser-19 carries the phosphoserine modification. 2 disordered regions span residues 56–89 and 136–233; these read SNAG…KKQD and RSKP…VPDM. Residues 69 to 78 show a composition bias toward polar residues; it reads GPSSASSIPT. Residues 159-171 are compositionally biased toward low complexity; that stretch reads LSMESLSSMQSQE. Residues 184–197 show a composition bias toward basic and acidic residues; that stretch reads ESKEIERGGRDTQH. Phosphoserine is present on residues Ser-267 and Ser-287. 2 disordered regions span residues 302–331 and 396–424; these read DTEV…DEQE and ISEE…EKED. Position 397 is a phosphoserine (Ser-397). Phosphothreonine is present on Thr-402. Polar residues predominate over residues 408–418; it reads RSNTLPKSFGS.

The protein belongs to the FAM13 family. As to quaternary structure, interacts with ANXA2. In terms of tissue distribution, expressed in the mammary gland, with similar levels at all stages of development, including pregnancy, lactation and involution.

Its function is as follows. (Microbial infection) Plays a role in the clearance of Pseudomonas aeruginosa by macrophages. In complex with ANXA2, promotes activation of Rho GTPases following P.aeruginosa infection. The polypeptide is Protein FAM13A (Fam13a) (Mus musculus (Mouse)).